Reading from the N-terminus, the 307-residue chain is Protoheme IX farnesyltransferase (307 aa).

8 helical membrane passes run 24 to 44, 52 to 72, 115 to 135, 152 to 172, 179 to 199, 224 to 244, 245 to 265, and 284 to 304; these read ISLL…VGLV, PVIA…AGAL, VVLG…TIFF, IVIG…AASG, VILV…LSLY, QILL…MLGE, AGLA…LLAV, and FGFS…EALV.

Belongs to the UbiA prenyltransferase family. Protoheme IX farnesyltransferase subfamily.

The protein localises to the cell inner membrane. It catalyses the reaction heme b + (2E,6E)-farnesyl diphosphate + H2O = Fe(II)-heme o + diphosphate. The protein operates within porphyrin-containing compound metabolism; heme O biosynthesis; heme O from protoheme: step 1/1. Its function is as follows. Converts heme B (protoheme IX) to heme O by substitution of the vinyl group on carbon 2 of heme B porphyrin ring with a hydroxyethyl farnesyl side group. The sequence is that of Protoheme IX farnesyltransferase from Azorhizobium caulinodans (strain ATCC 43989 / DSM 5975 / JCM 20966 / LMG 6465 / NBRC 14845 / NCIMB 13405 / ORS 571).